We begin with the raw amino-acid sequence, 58 residues long: MTGAGTPSQGKKNTTTHTKCRRCGEKSYHTKKKVCSSCGFGASAKRRDYEWQGKTGDN.

Polar residues predominate over residues 1–17 (MTGAGTPSQGKKNTTTH). A disordered region spans residues 1–26 (MTGAGTPSQGKKNTTTHTKCRRCGEK). Zn(2+) is bound by residues Cys-20, Cys-23, Cys-35, and Cys-38. The C4-type zinc-finger motif lies at 20-38 (CRRCGEKSYHTKKKVCSSC).

The protein belongs to the eukaryotic ribosomal protein eL37 family. It depends on Zn(2+) as a cofactor.

In terms of biological role, binds to the 23S rRNA. This Halobacterium salinarum (strain ATCC 29341 / DSM 671 / R1) protein is Large ribosomal subunit protein eL37.